The following is a 48-amino-acid chain: Cytochrome b559 subunit beta (48 aa).

A helical transmembrane segment spans residues 23–39; the sequence is WLAVHALAIPTVFFLGA. Heme is bound at residue His-27.

The protein belongs to the PsbE/PsbF family. As to quaternary structure, heterodimer of an alpha subunit and a beta subunit. PSII is composed of 1 copy each of membrane proteins PsbA, PsbB, PsbC, PsbD, PsbE, PsbF, PsbH, PsbI, PsbJ, PsbK, PsbL, PsbM, PsbT, PsbX, PsbY, Psb30/Ycf12, peripheral proteins PsbO, CyanoQ (PsbQ), PsbU, PsbV and a large number of cofactors. It forms dimeric complexes. Requires heme b as cofactor.

It is found in the cellular thylakoid membrane. This b-type cytochrome is tightly associated with the reaction center of photosystem II (PSII). PSII is a light-driven water:plastoquinone oxidoreductase that uses light energy to abstract electrons from H(2)O, generating O(2) and a proton gradient subsequently used for ATP formation. It consists of a core antenna complex that captures photons, and an electron transfer chain that converts photonic excitation into a charge separation. This is Cytochrome b559 subunit beta from Prochlorococcus marinus (strain SARG / CCMP1375 / SS120).